We begin with the raw amino-acid sequence, 346 residues long: Biotin synthase (346 aa).

A Radical SAM core domain is found at 38–256 (RQVQVSTLLS…IAVARIMMPT (219 aa)). [4Fe-4S] cluster-binding residues include Cys53, Cys57, and Cys60. Residues Cys97, Cys128, Cys188, and Arg260 each contribute to the [2Fe-2S] cluster site.

Belongs to the radical SAM superfamily. Biotin synthase family. In terms of assembly, homodimer. Requires [4Fe-4S] cluster as cofactor. [2Fe-2S] cluster is required as a cofactor.

It carries out the reaction (4R,5S)-dethiobiotin + (sulfur carrier)-SH + 2 reduced [2Fe-2S]-[ferredoxin] + 2 S-adenosyl-L-methionine = (sulfur carrier)-H + biotin + 2 5'-deoxyadenosine + 2 L-methionine + 2 oxidized [2Fe-2S]-[ferredoxin]. Its pathway is cofactor biosynthesis; biotin biosynthesis; biotin from 7,8-diaminononanoate: step 2/2. Its function is as follows. Catalyzes the conversion of dethiobiotin (DTB) to biotin by the insertion of a sulfur atom into dethiobiotin via a radical-based mechanism. This is Biotin synthase from Pseudescherichia vulneris (Escherichia vulneris).